The sequence spans 343 residues: Protein RecA (343 aa).

64–71 (GPESSGKT) contributes to the ATP binding site.

The protein belongs to the RecA family.

It is found in the cytoplasm. Functionally, can catalyze the hydrolysis of ATP in the presence of single-stranded DNA, the ATP-dependent uptake of single-stranded DNA by duplex DNA, and the ATP-dependent hybridization of homologous single-stranded DNAs. It interacts with LexA causing its activation and leading to its autocatalytic cleavage. This is Protein RecA from Cereibacter sphaeroides (strain ATCC 17023 / DSM 158 / JCM 6121 / CCUG 31486 / LMG 2827 / NBRC 12203 / NCIMB 8253 / ATH 2.4.1.) (Rhodobacter sphaeroides).